A 508-amino-acid chain; its full sequence is Maturase K (508 aa).

The protein belongs to the intron maturase 2 family. MatK subfamily.

It is found in the plastid. It localises to the chloroplast. Its function is as follows. Usually encoded in the trnK tRNA gene intron. Probably assists in splicing its own and other chloroplast group II introns. The protein is Maturase K of Abrus precatorius (Indian licorice).